The primary structure comprises 182 residues: UPF0149 protein CGSHiEE_07975 (182 aa).

This sequence belongs to the UPF0149 family.

The sequence is that of UPF0149 protein CGSHiEE_07975 from Haemophilus influenzae (strain PittEE).